The following is a 208-amino-acid chain: MEPHDSSHVDSEFRYTLFPIVYSIIFVLGVIANGYVLWVFARLYPSKKFNEIKIFMVNLTMADMLFLITLPLWIVYYQNGGNWIFPKFLCNLAGCLFFINTYCSVAFLGVITYNRFQAVTRPIKTAQANTRKRGISLSLVIWVAIVGAASYFFILDSTNTVPNSAGSGNITRCFEHYEKGSVPVLIIHIFIVFSFFLVFLIILFCNLV.

Over M1–T16 the chain is Extracellular. Residues L17–W38 traverse the membrane as a helical segment. Topologically, residues V39–I54 are cytoplasmic. Residues F55–I74 form a helical membrane-spanning segment. At V75–N91 the chain is on the extracellular side. C90 and C173 are oxidised to a cystine. A helical transmembrane segment spans residues L92–Y113. Residues N114–R133 are Cytoplasmic-facing. A helical membrane pass occupies residues G134–L155. Over D156–V184 the chain is Extracellular. Residue N169 is glycosylated (N-linked (GlcNAc...) asparagine). Residues L185–C205 traverse the membrane as a helical segment. At N206 to V208 the chain is on the cytoplasmic side.

It belongs to the G-protein coupled receptor 1 family. In terms of assembly, interacts with ARRB1.

It is found in the cell membrane. In terms of biological role, receptor for platelet activating factor, a chemotactic phospholipid mediator that possesses potent inflammatory, smooth-muscle contractile and hypotensive activity. Seems to mediate its action via a G protein that activates a phosphatidylinositol-calcium second messenger system. The chain is Platelet-activating factor receptor (PTAFR) from Macaca mulatta (Rhesus macaque).